A 131-amino-acid polypeptide reads, in one-letter code: SPbeta prophage-derived UPF0715 membrane protein YopD (131 aa).

4 helical membrane passes run 12 to 32, 38 to 58, 75 to 95, and 108 to 128; these read VYTL…YLFV, AIAL…YLVF, LINF…FWFV, and FEYY…DSIF.

It belongs to the UPF0715 family.

The protein localises to the cell membrane. In Bacillus subtilis (strain 168), this protein is SPbeta prophage-derived UPF0715 membrane protein YopD (yopD).